Consider the following 725-residue polypeptide: FYVE, RhoGEF and PH domain-containing protein 3 (725 aa).

The tract at residues Met1–Gln151 is disordered. Over residues Glu124–Ser136 the composition is skewed to acidic residues. Ser128 bears the Phosphoserine mark. Residues Lys157–Ala341 form the DH domain. The PH 1 domain occupies Glu370–Glu469. Residues Gln487 to Asp532 form a disordered region. Residues Thr500 to Glu512 show a composition bias toward low complexity. Over residues Glu521–Asp532 the composition is skewed to basic and acidic residues. An FYVE-type zinc finger spans residues Asp532 to Pro588. Cys538, Cys541, Cys555, Cys558, Cys563, Cys566, Cys580, and Cys583 together coordinate Zn(2+). The PH 2 domain occupies Pro604–His703. Residues His703–Pro725 form a disordered region.

Its subcellular location is the cytoplasm. It localises to the cytoskeleton. Its function is as follows. Promotes the formation of filopodia. May activate CDC42, a member of the Ras-like family of Rho- and Rac proteins, by exchanging bound GDP for free GTP. Plays a role in regulating the actin cytoskeleton and cell shape. This chain is FYVE, RhoGEF and PH domain-containing protein 3 (FGD3), found in Homo sapiens (Human).